The chain runs to 416 residues: cAMP-dependent protein kinase type II-beta regulatory subunit (416 aa).

The tract at residues 2 to 151 is dimerization and phosphorylation; it reads SIEIPAGLTE…RLQEACKDIL (150 aa). Residues 53–97 are disordered; the sequence is HEGRTWGDAGAAAGGGTPSKGVNFAEEPMRSDSENGEEEEAAEAG. Phosphothreonine is present on Thr-69. Residues Ser-83, Ser-85, and Ser-112 each carry the phosphoserine modification. Residues 152 to 273, Glu-221, Arg-230, 274 to 416, Glu-350, and Arg-359 each bind 3',5'-cyclic AMP; these read LFKN…ESLP and FLKS…EPTA.

Belongs to the cAMP-dependent kinase regulatory chain family. As to quaternary structure, the inactive form of the enzyme is composed of two regulatory chains and two catalytic chains. Activation by cAMP produces two active catalytic monomers and a regulatory dimer that binds four cAMP molecules. Interacts with PRKACA and PRKACB. Interacts with the phosphorylated form of PJA2. Forms a complex composed of PRKAR2B, GSK3B and GSKIP through GSKIP interaction; facilitates PKA-induced phosphorylation and regulates GSK3B activity. Post-translationally, phosphorylated by the activated catalytic chain. Four types of regulatory chains are found: I-alpha, I-beta, II-alpha, and II-beta. Their expression varies among tissues and is in some cases constitutive and in others inducible. Brain. Present in a few pyramidal neurons and mostly in mossy fibers. Colocalizes with PJA2 in dentate granule cells and at postsynaptic sites of primary hippocampal neurons.

Its subcellular location is the cytoplasm. The protein resides in the cell membrane. In terms of biological role, regulatory subunit of the cAMP-dependent protein kinases involved in cAMP signaling in cells. Type II regulatory chains mediate membrane association by binding to anchoring proteins, including the MAP2 kinase. This is cAMP-dependent protein kinase type II-beta regulatory subunit (Prkar2b) from Rattus norvegicus (Rat).